Consider the following 609-residue polypeptide: Chaperone protein DnaK (609 aa).

T173 carries the phosphothreonine; by autocatalysis modification. Positions 580-609 are disordered; the sequence is QAAQGGGAEGQEPKKDNVVDADYEVVDDKK. Residues 598-609 are compositionally biased toward acidic residues; that stretch reads VDADYEVVDDKK.

Belongs to the heat shock protein 70 family.

Acts as a chaperone. The chain is Chaperone protein DnaK from Brevibacillus brevis (strain 47 / JCM 6285 / NBRC 100599).